We begin with the raw amino-acid sequence, 213 residues long: Probable nicotinate-nucleotide adenylyltransferase (213 aa).

Belongs to the NadD family.

The catalysed reaction is nicotinate beta-D-ribonucleotide + ATP + H(+) = deamido-NAD(+) + diphosphate. The protein operates within cofactor biosynthesis; NAD(+) biosynthesis; deamido-NAD(+) from nicotinate D-ribonucleotide: step 1/1. Its function is as follows. Catalyzes the reversible adenylation of nicotinate mononucleotide (NaMN) to nicotinic acid adenine dinucleotide (NaAD). In Shigella boydii serotype 4 (strain Sb227), this protein is Probable nicotinate-nucleotide adenylyltransferase.